A 240-amino-acid polypeptide reads, in one-letter code: Probable transcriptional regulatory protein Hac_0344 (240 aa).

It belongs to the TACO1 family.

It localises to the cytoplasm. The chain is Probable transcriptional regulatory protein Hac_0344 from Helicobacter acinonychis (strain Sheeba).